The chain runs to 530 residues: Carbohydrate sulfotransferase 2 (530 aa).

A disordered region spans residues 1–20 (MSRSSPRALPPGALPRPLPA). Residues 1–54 (MSRSSPRALPPGALPRPLPAAPAAVQRALLPPWPRRAGRRWPASPLGMKVFRRK) lie on the Cytoplasmic side of the membrane. Pro residues predominate over residues 8–20 (ALPPGALPRPLPA). A helical; Signal-anchor for type II membrane protein membrane pass occupies residues 55–75 (ALVLCAGYALLLVLTMLNLLD). At 76 to 530 (YKWHKEPLQQ…SKTLLRKPRL (455 aa)) the chain is on the lumenal side. Positions 97 to 128 (GAAGAGWGRPGSPPAAPPRAHSRMDPRTPYRP) are disordered. 3'-phosphoadenylyl sulfate is bound at residue 173 to 179 (WRSGSSF). Residue asparagine 243 is glycosylated (N-linked (GlcNAc...) asparagine). 332-340 (RDPRAVASS) lines the 3'-phosphoadenylyl sulfate pocket. N-linked (GlcNAc...) asparagine glycans are attached at residues asparagine 457 and asparagine 475.

The protein belongs to the sulfotransferase 1 family. Gal/GlcNAc/GalNAc subfamily. In terms of assembly, homodimer; disulfide-linked. Homodimerization is not essential for enzyme activity. As to expression, in brain, it is expressed in pyramidal cells in the CA3 subregion of the hippocampus, cerebellar nucleus and Purkinje cells. Expressed in peripheral lymph nodes.

It is found in the golgi apparatus. It localises to the trans-Golgi network membrane. The enzyme catalyses 3-O-{N-acetyl-beta-D-glucosaminyl-(1-&gt;3)-beta-D-galactosyl-(1-&gt;3)-N-acetyl-alpha-D-galactosaminyl}-L-threonyl-[protein] + 3'-phosphoadenylyl sulfate = 3-O-{6-O-sulfo-N-acetyl-beta-D-glucosaminyl-(1-&gt;3)-beta-D-galactosyl-(1-&gt;3)-N-acetyl-alpha-D-galactosaminyl}-L-threonyl-[protein] + adenosine 3',5'-bisphosphate + H(+). The catalysed reaction is 3-O-{N-acetyl-beta-D-glucosaminyl-(1-&gt;3)-beta-D-galactosyl-(1-&gt;3)-N-acetyl-alpha-D-galactosaminyl}-L-seryl-[protein] + 3'-phosphoadenylyl sulfate = 3-O-{6-O-sulfo-N-acetyl-beta-D-glucosaminyl-(1-&gt;3)-beta-D-galactosyl-(1-&gt;3)-N-acetyl-alpha-D-galactosaminyl}-L-seryl-[protein] + adenosine 3',5'-bisphosphate + H(+). It catalyses the reaction a 3-O-{beta-D-galactosyl-(1-&gt;3)-[N-acetyl-beta-D-glucosaminyl-(1-&gt;6)]-N-acetyl-alpha-D-galactosaminyl}-L-threonyl-[protein] + 3'-phosphoadenylyl sulfate = 3-O-{beta-D-galactosyl-(1-&gt;3)-[6-O-sulfo-N-acetyl-beta-D-glucosaminyl-(1-&gt;6)]-N-acetyl-alpha-D-galactosaminyl}-L-threonyl-[protein] + adenosine 3',5'-bisphosphate + H(+). It carries out the reaction 3-O-{beta-D-galactosyl-(1-&gt;3)-[N-acetyl-beta-D-glucosaminyl-(1-&gt;6)]-N-acetyl-alpha-D-galactosaminyl}-L-seryl-[protein] + 3'-phosphoadenylyl sulfate = 3-O-{beta-D-galactosyl-(1-&gt;3)-[6-O-sulfo-N-acetyl-beta-D-glucosaminyl-(1-&gt;6)]-N-acetyl-alpha-D-galactosaminyl}-L-seryl-[protein] + adenosine 3',5'-bisphosphate + H(+). Its pathway is protein modification; carbohydrate sulfation. Its function is as follows. Sulfotransferase that utilizes 3'-phospho-5'-adenylyl sulfate (PAPS) as sulfonate donor to catalyze the transfer of sulfate to position 6 of non-reducing N-acetylglucosamine (GlcNAc) residues within keratan-like structures on N-linked glycans and within mucin-associated glycans that can ultimately serve as SELL ligands. SELL ligands are present in high endothelial cells (HEVs) and play a central role in lymphocyte homing at sites of inflammation. Participates in biosynthesis of the SELL ligand sialyl 6-sulfo Lewis X and in lymphocyte homing to Peyer patches. Has no activity toward O-linked sugars. Its substrate specificity may be influenced by its subcellular location. Sulfates GlcNAc residues at terminal, non-reducing ends of oligosaccharide chains. This is Carbohydrate sulfotransferase 2 (Chst2) from Mus musculus (Mouse).